A 560-amino-acid polypeptide reads, in one-letter code: Putative protease Do-like 11, mitochondrial (560 aa).

Residues 1–65 (MFFRPCVHTV…RRSSTSAAER (65 aa)) constitute a mitochondrion transit peptide. A serine protease region spans residues 117–302 (TEYSKSKPWK…ESRQYSCFGS (186 aa)). Catalysis depends on charge relay system residues H150, D184, and S258. The PDZ domain occupies 288-384 (ITSVQESRQY…YLVSMKKPGE (97 aa)).

The protein belongs to the peptidase S1C family.

The protein resides in the mitochondrion membrane. In terms of biological role, putative serine protease. The polypeptide is Putative protease Do-like 11, mitochondrial (DEGP11) (Arabidopsis thaliana (Mouse-ear cress)).